The sequence spans 115 residues: NADH-ubiquinone oxidoreductase chain 3 (115 aa).

A run of 3 helical transmembrane segments spans residues 3-23 (LLIIITINITLSFILISIAFW), 55-75 (FFLVAITFLLFDLEIALLLPL), and 86-106 (TMMATAFILVTILALGLSYEW).

Belongs to the complex I subunit 3 family. Core subunit of respiratory chain NADH dehydrogenase (Complex I) which is composed of 45 different subunits. Interacts with TMEM186. Interacts with TMEM242.

It localises to the mitochondrion inner membrane. The catalysed reaction is a ubiquinone + NADH + 5 H(+)(in) = a ubiquinol + NAD(+) + 4 H(+)(out). In terms of biological role, core subunit of the mitochondrial membrane respiratory chain NADH dehydrogenase (Complex I) which catalyzes electron transfer from NADH through the respiratory chain, using ubiquinone as an electron acceptor. Essential for the catalytic activity of complex I. The sequence is that of NADH-ubiquinone oxidoreductase chain 3 from Rattus norvegicus (Rat).